A 259-amino-acid polypeptide reads, in one-letter code: Flap endonuclease Xni (259 aa).

A Mg(2+)-binding site is contributed by aspartate 109. The 5'-3' exonuclease domain maps to 165–255; sequence VTPAQLTDYW…FNLQDIRFNS (91 aa). Residues leucine 176, proline 185, valine 187, and isoleucine 190 each contribute to the K(+) site. An interaction with DNA region spans residues 189–194; the sequence is GIGPKA.

The protein belongs to the Xni family. Requires Mg(2+) as cofactor. The cofactor is K(+).

Functionally, has flap endonuclease activity. During DNA replication, flap endonucleases cleave the 5'-overhanging flap structure that is generated by displacement synthesis when DNA polymerase encounters the 5'-end of a downstream Okazaki fragment. This Vibrio cholerae serotype O1 (strain ATCC 39315 / El Tor Inaba N16961) protein is Flap endonuclease Xni.